The chain runs to 149 residues: Calmodulin-2 (149 aa).

Residue A2 is modified to N-acetylalanine. EF-hand domains lie at E8 to N43, P44 to D79, D81 to K116, and L117 to K149. D21, D23, D25, C27, E32, D57, D59, N61, T63, E68, D94, D96, N98, Y100, and D105 together coordinate Ca(2+). Position 116 is an N6,N6,N6-trimethyllysine (K116). Residues D130, D132, D134, Q136, and E141 each coordinate Ca(2+).

Belongs to the calmodulin family.

Functionally, calmodulin mediates the control of a large number of enzymes, ion channels and other proteins by Ca(2+). Among the enzymes to be stimulated by the calmodulin-Ca(2+) complex are a number of protein kinases and phosphatases. The polypeptide is Calmodulin-2 (CAM72) (Petunia hybrida (Petunia)).